Here is a 467-residue protein sequence, read N- to C-terminus: Neutral protease 2 homolog NFIA_031120 (467 aa).

The N-terminal stretch at Met-1–Ala-19 is a signal peptide. The propeptide occupies Leu-20–Arg-172. 2 disulfide bridges follow: Cys-179/Cys-251 and Cys-258/Cys-276. A Zn(2+)-binding site is contributed by His-300. Glu-301 is a catalytic residue. Zn(2+) contacts are provided by His-304 and Asp-315. The segment covering Trp-359–Gly-451 has biased composition (polar residues). Residues Trp-359–Ala-467 are disordered.

This sequence belongs to the peptidase M35 family. It depends on Zn(2+) as a cofactor.

It is found in the secreted. The catalysed reaction is Preferential cleavage of bonds with hydrophobic residues in P1'. Also 3-Asn-|-Gln-4 and 8-Gly-|-Ser-9 bonds in insulin B chain.. In terms of biological role, secreted metalloproteinase that allows assimilation of proteinaceous substrates. Shows high activities on basic nuclear substrates such as histone and protamine. This is Neutral protease 2 homolog NFIA_031120 from Neosartorya fischeri (strain ATCC 1020 / DSM 3700 / CBS 544.65 / FGSC A1164 / JCM 1740 / NRRL 181 / WB 181) (Aspergillus fischerianus).